We begin with the raw amino-acid sequence, 406 residues long: L-methionine gamma-lyase (406 aa).

Pyridoxal 5'-phosphate contacts are provided by residues 76–78 (YQR) and 106–107 (GM). Residue Y132 coordinates L-homocysteine. 219–221 (SAT) serves as a coordination point for pyridoxal 5'-phosphate. The residue at position 222 (K222) is an N6-(pyridoxal phosphate)lysine. Residue R380 coordinates L-homocysteine. R380 contributes to the L-methionine binding site.

This sequence belongs to the trans-sulfuration enzymes family. L-methionine gamma-lyase subfamily. Homotetramer. It depends on pyridoxal 5'-phosphate as a cofactor.

The catalysed reaction is L-methionine + H2O = methanethiol + 2-oxobutanoate + NH4(+). It carries out the reaction L-homocysteine + H2O = 2-oxobutanoate + hydrogen sulfide + NH4(+) + H(+). Is inhibited in vitro by carbonyl reagents, completely inactivated by DL-propargylglycine, and unaffected by metal-chelating agents. In terms of biological role, catalyzes the alpha,gamma-elimination of L-methionine to produce methanethiol, 2-oxobutanoate and ammonia. May be responsible for the production of methanethiol associated with desirable Cheddar-type sulfur notes during cheese ripening. Is also able to catalyze the alpha,gamma-elimination of L-homocysteine and DL-selenomethionine, but has no activity toward L-cysteine, L-cystathionine, S-adenosyl-L-homocysteine and D-methionine. The sequence is that of L-methionine gamma-lyase from Brevibacterium aurantiacum.